The following is a 169-amino-acid chain: Putative phosphoesterase SACOL1020 (169 aa).

Residue H34 is the Proton donor of the active site. 2 consecutive short sequence motifs (HXTX) follow at residues 34–37 and 115–118; these read HVTI and HFTI. H115 (proton acceptor) is an active-site residue.

This sequence belongs to the 2H phosphoesterase superfamily. YjcG family.

The polypeptide is Putative phosphoesterase SACOL1020 (Staphylococcus aureus (strain COL)).